The chain runs to 492 residues: 3-octaprenyl-4-hydroxybenzoate carboxy-lyase (492 aa).

Asn-175 is a binding site for Mn(2+). Prenylated FMN-binding positions include 178-180 (IYR), 192-194 (RWL), and 197-198 (RG). Glu-241 is a binding site for Mn(2+). Asp-290 functions as the Proton donor in the catalytic mechanism.

It belongs to the UbiD family. Homohexamer. It depends on prenylated FMN as a cofactor. Requires Mn(2+) as cofactor.

It is found in the cell membrane. The enzyme catalyses a 4-hydroxy-3-(all-trans-polyprenyl)benzoate + H(+) = a 2-(all-trans-polyprenyl)phenol + CO2. It functions in the pathway cofactor biosynthesis; ubiquinone biosynthesis. Its function is as follows. Catalyzes the decarboxylation of 3-octaprenyl-4-hydroxy benzoate to 2-octaprenylphenol, an intermediate step in ubiquinone biosynthesis. This Salmonella paratyphi A (strain ATCC 9150 / SARB42) protein is 3-octaprenyl-4-hydroxybenzoate carboxy-lyase.